A 67-amino-acid polypeptide reads, in one-letter code: Large ribosomal subunit protein bL32 (67 aa).

A compositionally biased stretch (basic residues) spans 1-19 (MAVPKRKMSRANTRARRSQ). The disordered stretch occupies residues 1 to 21 (MAVPKRKMSRANTRARRSQWK).

It belongs to the bacterial ribosomal protein bL32 family.

In Micrococcus luteus (strain ATCC 4698 / DSM 20030 / JCM 1464 / CCM 169 / CCUG 5858 / IAM 1056 / NBRC 3333 / NCIMB 9278 / NCTC 2665 / VKM Ac-2230) (Micrococcus lysodeikticus), this protein is Large ribosomal subunit protein bL32.